Here is a 193-residue protein sequence, read N- to C-terminus: Xanthine phosphoribosyltransferase (193 aa).

Xanthine contacts are provided by Leu20 and Asn27. Residue 129–133 (ANGKA) participates in 5-phospho-alpha-D-ribose 1-diphosphate binding. Lys157 serves as a coordination point for xanthine.

The protein belongs to the purine/pyrimidine phosphoribosyltransferase family. Xpt subfamily. As to quaternary structure, homodimer.

It localises to the cytoplasm. The enzyme catalyses XMP + diphosphate = xanthine + 5-phospho-alpha-D-ribose 1-diphosphate. It participates in purine metabolism; XMP biosynthesis via salvage pathway; XMP from xanthine: step 1/1. Its function is as follows. Converts the preformed base xanthine, a product of nucleic acid breakdown, to xanthosine 5'-monophosphate (XMP), so it can be reused for RNA or DNA synthesis. In Bifidobacterium adolescentis (strain ATCC 15703 / DSM 20083 / NCTC 11814 / E194a), this protein is Xanthine phosphoribosyltransferase.